The primary structure comprises 1027 residues: A-factor-processing enzyme (1027 aa).

Histidine 118 provides a ligand contact to Zn(2+). Glutamate 121 (proton acceptor) is an active-site residue. Residues histidine 122 and glutamate 199 each coordinate Zn(2+).

This sequence belongs to the peptidase M16 family. Zn(2+) is required as a cofactor.

The protein localises to the membrane. Inhibited by chelating agents like EDTA, TPEN and 1,1-phenanthroline, as well as NEM, free cysteine and DTT. Involved in the N-terminal endoproteolytic cleavage of the P2 precursor of the a-factor mating pheromone. Capable of proteolysing the established mammalian insulin-degrading enzymes (IDEs) substrates amyloid-beta peptide and insulin B-chain. In Saccharomyces cerevisiae (strain ATCC 204508 / S288c) (Baker's yeast), this protein is A-factor-processing enzyme (STE23).